The following is a 642-amino-acid chain: Threonine--tRNA ligase (642 aa).

The TGS domain maps to 1-61 (MPVITLPDGS…ENDATLAIIT (61 aa)). Residues 243–534 (DHRKIGKQLD…LTEEFAGFFP (292 aa)) are catalytic. Residues C334, H385, and H511 each contribute to the Zn(2+) site.

It belongs to the class-II aminoacyl-tRNA synthetase family. As to quaternary structure, homodimer. The cofactor is Zn(2+).

The protein resides in the cytoplasm. It catalyses the reaction tRNA(Thr) + L-threonine + ATP = L-threonyl-tRNA(Thr) + AMP + diphosphate + H(+). Functionally, catalyzes the attachment of threonine to tRNA(Thr) in a two-step reaction: L-threonine is first activated by ATP to form Thr-AMP and then transferred to the acceptor end of tRNA(Thr). Also edits incorrectly charged L-seryl-tRNA(Thr). The polypeptide is Threonine--tRNA ligase (Salmonella dublin (strain CT_02021853)).